The chain runs to 239 residues: Pyridoxine 5'-phosphate synthase (239 aa).

Residue N7 coordinates 3-amino-2-oxopropyl phosphate. 9–10 serves as a coordination point for 1-deoxy-D-xylulose 5-phosphate; that stretch reads DH. R18 contacts 3-amino-2-oxopropyl phosphate. Residue H43 is the Proton acceptor of the active site. Residues R45 and H50 each coordinate 1-deoxy-D-xylulose 5-phosphate. E70 functions as the Proton acceptor in the catalytic mechanism. Residue T100 participates in 1-deoxy-D-xylulose 5-phosphate binding. The Proton donor role is filled by H191. Residues G192 and 213–214 each bind 3-amino-2-oxopropyl phosphate; that span reads GH.

The protein belongs to the PNP synthase family. In terms of assembly, homooctamer; tetramer of dimers.

It is found in the cytoplasm. It carries out the reaction 3-amino-2-oxopropyl phosphate + 1-deoxy-D-xylulose 5-phosphate = pyridoxine 5'-phosphate + phosphate + 2 H2O + H(+). It functions in the pathway cofactor biosynthesis; pyridoxine 5'-phosphate biosynthesis; pyridoxine 5'-phosphate from D-erythrose 4-phosphate: step 5/5. Catalyzes the complicated ring closure reaction between the two acyclic compounds 1-deoxy-D-xylulose-5-phosphate (DXP) and 3-amino-2-oxopropyl phosphate (1-amino-acetone-3-phosphate or AAP) to form pyridoxine 5'-phosphate (PNP) and inorganic phosphate. The protein is Pyridoxine 5'-phosphate synthase of Syntrophotalea carbinolica (strain DSM 2380 / NBRC 103641 / GraBd1) (Pelobacter carbinolicus).